The sequence spans 543 residues: MPPPLQAQRLLLSHRRLPSPHRRRFTAVSSLPSSPAKTVAAAAAHAPSSILSIRESLLSGERTAAEITAEYLSRLRRTEPSVRSFIHVADAAAEREAEELDRRIATEGLDAVGPLAGVLVGVKDNLCTANMPSTGGSRILDGYQPAYDATAVRRLREAGAIVVGKTNLDEFGMGSTTEGSGFQVTTNPWDDSRVPGGSSGGSASAVSARQCVVSLGSDTGGSVRQPASFCGVVGLKPTYGRVSRFGLMAYASSLDVVGCFGSSVVDTATILSVIAGHDKMDSTSSSHDVSDYKSELVPLDLLESKPLNGMRIGIIQETLGEGVETGVISSIKDAASHLEQLGSVVEEVSLPSFSLGLPAYYILASSEASSNLSRYDGIRYGRQVSGDDLNELYGGSRANGLGHEVKMRILMGTYALSAGYYDAYYKRAQQVRTLVKKSFKEALERYDILVSPAAPSAAYKIGEKINDPLAMYAGDTMTVNVNLAGLPALVVPCGFVEGGSAGLPVGLQMIGSPFSEGNLLRIGHIFEQTLQNYSFVPPLLAES.

Catalysis depends on charge relay system residues Lys123 and Ser198. The Acyl-ester intermediate role is filled by Ser222.

This sequence belongs to the amidase family. GatA subfamily. Subunit of the heterotrimeric GatCAB amidotransferase (AdT) complex, composed of A, B and C subunits.

Its subcellular location is the mitochondrion. The protein resides in the plastid. The protein localises to the chloroplast stroma. The catalysed reaction is L-glutamyl-tRNA(Gln) + L-glutamine + ATP + H2O = L-glutaminyl-tRNA(Gln) + L-glutamate + ADP + phosphate + H(+). Its function is as follows. Allows the formation of correctly charged Gln-tRNA(Gln) through the transamidation of misacylated Glu-tRNA(Gln) in chloroplasts and mitochondria. The reaction takes place in the presence of glutamine and ATP through an activated gamma-phospho-Glu-tRNA(Gln). The sequence is that of Glutamyl-tRNA(Gln) amidotransferase subunit A, chloroplastic/mitochondrial from Oryza sativa subsp. indica (Rice).